Consider the following 125-residue polypeptide: Egg cell-secreted protein 1.3 (125 aa).

The N-terminal stretch at 1-24 (MASNTSFLFVTVTLLLVLNVSSRA) is a signal peptide.

It belongs to the plant egg cell-secreted peptide family. As to expression, restricted to female reproductive tissues, specifically accumulating in storage vesicles of the unfertilized egg cell.

The protein resides in the cytoplasmic vesicle. The protein localises to the secreted. Its function is as follows. Involved in the regulation of gamete interactions during the double fertilization and to prevent multiple-pollen tube attraction; mediates the redistribution of the gamete fusogen HAP2/GCS1 to the cell surface after secretion upon sperm arrival. In Arabidopsis thaliana (Mouse-ear cress), this protein is Egg cell-secreted protein 1.3 (EC1.3).